The sequence spans 162 residues: Xanthine-guanine phosphoribosyltransferase (162 aa).

5-phospho-alpha-D-ribose 1-diphosphate contacts are provided by residues 41-42 and 92-100; these read RG and DDLVDTGNT. Residue D93 participates in Mg(2+) binding. Guanine contacts are provided by D96 and I139. Xanthine contacts are provided by D96 and I139. Residues 96-100 and 138-139 contribute to the GMP site; these read DTGNT and WI.

It belongs to the purine/pyrimidine phosphoribosyltransferase family. XGPT subfamily. Homotetramer. Mg(2+) is required as a cofactor.

The protein localises to the cell inner membrane. It catalyses the reaction GMP + diphosphate = guanine + 5-phospho-alpha-D-ribose 1-diphosphate. The enzyme catalyses XMP + diphosphate = xanthine + 5-phospho-alpha-D-ribose 1-diphosphate. The catalysed reaction is IMP + diphosphate = hypoxanthine + 5-phospho-alpha-D-ribose 1-diphosphate. It functions in the pathway purine metabolism; GMP biosynthesis via salvage pathway; GMP from guanine: step 1/1. The protein operates within purine metabolism; XMP biosynthesis via salvage pathway; XMP from xanthine: step 1/1. Purine salvage pathway enzyme that catalyzes the transfer of the ribosyl-5-phosphate group from 5-phospho-alpha-D-ribose 1-diphosphate (PRPP) to the N9 position of the 6-oxopurines guanine and xanthine to form the corresponding ribonucleotides GMP (guanosine 5'-monophosphate) and XMP (xanthosine 5'-monophosphate), with the release of PPi. To a lesser extent, also acts on hypoxanthine. The polypeptide is Xanthine-guanine phosphoribosyltransferase (Chromohalobacter salexigens (strain ATCC BAA-138 / DSM 3043 / CIP 106854 / NCIMB 13768 / 1H11)).